A 491-amino-acid polypeptide reads, in one-letter code: Probable glycine dehydrogenase (decarboxylating) subunit 2 (491 aa).

N6-(pyridoxal phosphate)lysine is present on Lys273.

The protein belongs to the GcvP family. C-terminal subunit subfamily. The glycine cleavage system is composed of four proteins: P, T, L and H. In this organism, the P 'protein' is a heterodimer of two subunits. Pyridoxal 5'-phosphate is required as a cofactor.

It carries out the reaction N(6)-[(R)-lipoyl]-L-lysyl-[glycine-cleavage complex H protein] + glycine + H(+) = N(6)-[(R)-S(8)-aminomethyldihydrolipoyl]-L-lysyl-[glycine-cleavage complex H protein] + CO2. The glycine cleavage system catalyzes the degradation of glycine. The P protein binds the alpha-amino group of glycine through its pyridoxal phosphate cofactor; CO(2) is released and the remaining methylamine moiety is then transferred to the lipoamide cofactor of the H protein. In Bacillus cereus (strain ATCC 10987 / NRS 248), this protein is Probable glycine dehydrogenase (decarboxylating) subunit 2.